The chain runs to 200 residues: Holliday junction branch migration complex subunit RuvA (200 aa).

Residues 1–64 (MFAYFRGKLT…EDLLQLYGFS (64 aa)) form a domain I region. The domain II stretch occupies residues 65-143 (GEEERQLFRL…KLSPVSALAS (79 aa)). The tract at residues 144–154 (PARLSSTLLRD) is flexible linker. The segment at 154–200 (DDAVNALVTLGFSRIIVQKAVVAILEQNPGLTVEEVIKAALVSIHNS) is domain III.

Belongs to the RuvA family. As to quaternary structure, homotetramer. Forms an RuvA(8)-RuvB(12)-Holliday junction (HJ) complex. HJ DNA is sandwiched between 2 RuvA tetramers; dsDNA enters through RuvA and exits via RuvB. An RuvB hexamer assembles on each DNA strand where it exits the tetramer. Each RuvB hexamer is contacted by two RuvA subunits (via domain III) on 2 adjacent RuvB subunits; this complex drives branch migration. In the full resolvosome a probable DNA-RuvA(4)-RuvB(12)-RuvC(2) complex forms which resolves the HJ.

Its subcellular location is the cytoplasm. Functionally, the RuvA-RuvB-RuvC complex processes Holliday junction (HJ) DNA during genetic recombination and DNA repair, while the RuvA-RuvB complex plays an important role in the rescue of blocked DNA replication forks via replication fork reversal (RFR). RuvA specifically binds to HJ cruciform DNA, conferring on it an open structure. The RuvB hexamer acts as an ATP-dependent pump, pulling dsDNA into and through the RuvAB complex. HJ branch migration allows RuvC to scan DNA until it finds its consensus sequence, where it cleaves and resolves the cruciform DNA. This chain is Holliday junction branch migration complex subunit RuvA, found in Pelodictyon phaeoclathratiforme (strain DSM 5477 / BU-1).